We begin with the raw amino-acid sequence, 311 residues long: Sensor histidine kinase YcbM (311 aa).

The helical transmembrane segment at M1–I21 threads the bilayer. Topologically, residues M22–Y311 are cytoplasmic. The region spanning N92–T310 is the Histidine kinase domain. H95 carries the phosphohistidine; by autocatalysis modification.

Its subcellular location is the cell membrane. The enzyme catalyses ATP + protein L-histidine = ADP + protein N-phospho-L-histidine.. Its function is as follows. Member of the two-component regulatory system YcbM/YcbL. Probably activates YcbL by phosphorylation. The protein is Sensor histidine kinase YcbM (ycbM) of Bacillus subtilis (strain 168).